Reading from the N-terminus, the 218-residue chain is Large ribosomal subunit protein bL25 (218 aa).

Residues 197–218 (PAEESGEKPVAHIEEKESTEKE) form a disordered region. The span at 201-218 (SGEKPVAHIEEKESTEKE) shows a compositional bias: basic and acidic residues.

The protein belongs to the bacterial ribosomal protein bL25 family. CTC subfamily. In terms of assembly, part of the 50S ribosomal subunit; part of the 5S rRNA/L5/L18/L25 subcomplex. Contacts the 5S rRNA. Binds to the 5S rRNA independently of L5 and L18.

Functionally, this is one of the proteins that binds to the 5S RNA in the ribosome where it forms part of the central protuberance. The protein is Large ribosomal subunit protein bL25 of Dehalococcoides mccartyi (strain ATCC BAA-2100 / JCM 16839 / KCTC 5957 / BAV1).